A 633-amino-acid chain; its full sequence is MAAGDGGRVSSGRDVACVTEVADTLGAMANQGFDFLCMPIFHPRFKREFYKEPAKSRPGPQTRSDLLLSGRDWNTLIVGKLSDWIKTDSEVSRIRKTSEAAMQQELNFSAYLGLPAFLIPLKQEDNSNLSRLLINHIHVGHHSTMFWMRVPLMAPNDLRDDLIENEPISLSEEDNSGEERTWIWWHNFRSLCDYNKKIALAIEIGADLPSGHVIDRWLGEPIKAAFLPTSIFLTNKKGFPVLTKVHQRLIFKLFKLEVQFVISGSHHHSEKDLCSYLQYLEYLSQNSPPPNAYEMFAKGYEDYLQSPLQPLMDNLESQTYEVFEKDPVKYSQYQQAVYKCLLDRVPEEEKETNIQILMVLGAGRGPLVNASLRAAKQAERKIKVYAVEKNPNAVITLEGWRYEEWGSQVTVVSGDMREWKAPEKADIIVSELLGSFGDNELSPECLDGAQHFLKDDGVSIPGEYTSYLAPISSSKLYNEVRACREKDRDPEAQFEMPYVVRLHNFHQLSDPLPCFTFHHPNKDDVIDNNRYCCLQYRVDLNTVLHGFAGYFNTVLYKDVTLSICPESHSPGMFSWFPILFPIKQPIPMREGDTVCVRFWRCNNGKKVWYEWAVTSPVCSAIHNPTGRSYTIGL.

The 308-residue stretch at 304 to 611 (LQSPLQPLMD…NNGKKVWYEW (308 aa)) folds into the SAM-dependent MTase PRMT-type domain. Residue Tyr320 participates in S-adenosyl-L-methionine binding. Phe323 is an a protein binding site. Residues 329–330 (KY), Glu388, and 414–416 (GDM) contribute to the S-adenosyl-L-methionine site. Residues Glu431 and Glu440 each coordinate a protein. Residues Glu431 and Glu440 each act as proton donor/acceptor in the active site. Glu440 is an S-adenosyl-L-methionine binding site.

The protein belongs to the class I-like SAM-binding methyltransferase superfamily. Protein arginine N-methyltransferase family. In terms of assembly, heterotetramer; dimer of heterodimer with wdr77. Interacts with wee2-a; this interaction is disrupted upon activation of the DNA replication checkpoint. As to expression, detected in egg (at protein level).

The protein resides in the cytoplasm. The protein localises to the nucleus. Its subcellular location is the cytosol. The catalysed reaction is L-arginyl-[protein] + 2 S-adenosyl-L-methionine = N(omega),N(omega)'-dimethyl-L-arginyl-[protein] + 2 S-adenosyl-L-homocysteine + 2 H(+). Its function is as follows. Arginine methyltransferase that can both catalyze the formation of omega-N monomethylarginine (MMA) and symmetrical dimethylarginine (sDMA), with a preference for the formation of MMA. Specifically mediates the symmetrical dimethylation of arginine residues in the small nuclear ribonucleoproteins; such methylation being required for the assembly and biogenesis of snRNP core particles. Methylates the arginine in the motif G-R-G-X-G in its substrates histone H2A, H2AX and H4, producing both monomethylated and symmetrically dimethylated 'Arg-3'. Methylates nucleoplasmin at 'Arg-192', producing both monomethylated and symmetrically dimethylated 'Arg-192'. Involved in the DNA replication checkpoint. Promotes entry into mitosis by promoting the proteasomal degradation of wee2-a. May act as a transcriptional corepressor in CRY1-mediated repression of the core circadian component PER1. Involved in spliceosome maturation and mRNA splicing. The chain is Protein arginine N-methyltransferase 5 (prmt5) from Xenopus laevis (African clawed frog).